The chain runs to 593 residues: Copine-5 (593 aa).

The 133-residue stretch at 2–134 (EQPEDMASLS…SSGSRLEKPL (133 aa)) folds into the C2 1 domain. Ser-19 bears the Phosphoserine mark. Positions 38, 44, 98, 100, 103, 108, and 110 each coordinate Ca(2+). Ser-103 bears the Phosphoserine mark. Ser-140 bears the Phosphoserine mark. Residues 161-284 (KCGTIILSAE…ARGQSQFNIY (124 aa)) form the C2 2 domain. The Ca(2+) site is built by Asp-192, Asp-198, Asp-254, Asp-256, and Asp-262. The VWFA domain occupies 328-554 (NFTVAIDFTA…DVLAEIPDQL (227 aa)). The interval 562-593 (GIRPRPPPAAPAQSPPQSPAHSPPGSPVHTHI) is disordered. Residues 565–587 (PRPPPAAPAQSPPQSPAHSPPGS) are compositionally biased toward pro residues.

It belongs to the copine family. Requires Ca(2+) as cofactor. As to expression, expressed in the cerebra and cerebellum of newborn brain. Expressed in the eye, lung and muscles but weakly expressed in the adult brain (at protein level).

It is found in the perikaryon. The protein resides in the cell projection. Probable calcium-dependent phospholipid-binding protein that may play a role in calcium-mediated intracellular processes. Plays a role in dendrite formation by melanocytes. The sequence is that of Copine-5 from Mus musculus (Mouse).